The primary structure comprises 493 residues: Glutamyl-tRNA(Gln) amidotransferase subunit A (493 aa).

Residues Lys-78 and Ser-158 each act as charge relay system in the active site. Residue Ser-182 is the Acyl-ester intermediate of the active site.

It belongs to the amidase family. GatA subfamily. In terms of assembly, heterotrimer of A, B and C subunits.

The catalysed reaction is L-glutamyl-tRNA(Gln) + L-glutamine + ATP + H2O = L-glutaminyl-tRNA(Gln) + L-glutamate + ADP + phosphate + H(+). Functionally, allows the formation of correctly charged Gln-tRNA(Gln) through the transamidation of misacylated Glu-tRNA(Gln) in organisms which lack glutaminyl-tRNA synthetase. The reaction takes place in the presence of glutamine and ATP through an activated gamma-phospho-Glu-tRNA(Gln). This chain is Glutamyl-tRNA(Gln) amidotransferase subunit A, found in Rickettsia typhi (strain ATCC VR-144 / Wilmington).